The following is a 276-amino-acid chain: D-aminoacyl-tRNA deacylase (276 aa).

The protein belongs to the DtdA deacylase family. As to quaternary structure, monomer. The cofactor is Zn(2+).

It catalyses the reaction a D-aminoacyl-tRNA + H2O = a tRNA + a D-alpha-amino acid + H(+). It carries out the reaction glycyl-tRNA(Ala) + H2O = tRNA(Ala) + glycine + H(+). D-aminoacyl-tRNA deacylase with broad substrate specificity. By recycling D-aminoacyl-tRNA to D-amino acids and free tRNA molecules, this enzyme counteracts the toxicity associated with the formation of D-aminoacyl-tRNA entities in vivo. The chain is D-aminoacyl-tRNA deacylase from Staphylothermus marinus (strain ATCC 43588 / DSM 3639 / JCM 9404 / F1).